We begin with the raw amino-acid sequence, 193 residues long: Large ribosomal subunit protein uL5 (193 aa).

This sequence belongs to the universal ribosomal protein uL5 family. In terms of assembly, part of the 50S ribosomal subunit; part of the 5S rRNA/L5/L18/L25 subcomplex. Contacts the 5S rRNA and the P site tRNA. Forms a bridge to the 30S subunit in the 70S ribosome.

This is one of the proteins that bind and probably mediate the attachment of the 5S RNA into the large ribosomal subunit, where it forms part of the central protuberance. In the 70S ribosome it contacts protein S13 of the 30S subunit (bridge B1b), connecting the 2 subunits; this bridge is implicated in subunit movement. Contacts the P site tRNA; the 5S rRNA and some of its associated proteins might help stabilize positioning of ribosome-bound tRNAs. The sequence is that of Large ribosomal subunit protein uL5 from Novosphingobium aromaticivorans (strain ATCC 700278 / DSM 12444 / CCUG 56034 / CIP 105152 / NBRC 16084 / F199).